Consider the following 116-residue polypeptide: Small ribosomal subunit protein uS13m (116 aa).

The protein belongs to the universal ribosomal protein uS13 family. Part of the small ribosomal subunit.

It localises to the mitochondrion. Located at the top of the head of the small subunit, it contacts several helices of the 18S rRNA. The chain is Small ribosomal subunit protein uS13m (RPS13) from Daucus carota (Wild carrot).